The sequence spans 589 residues: Mitoguardin 2 (589 aa).

Transmembrane regions (helical) follow at residues 11-31 (IIQA…TTFG) and 42-62 (PGLR…ALAA). Residues 87–134 (VPGSVLPVRRSSSAKKGYSRSRVQSPSSKSNDTLSGISSLDPSKHSSS) are disordered. 2 stretches are compositionally biased toward low complexity: residues 106 to 116 (RSRVQSPSSKS) and 123 to 134 (ISSLDPSKHSSS).

It belongs to the mitoguardin family. In terms of assembly, homodimer and heterodimer; forms heterodimers with miga1.

It is found in the mitochondrion outer membrane. In terms of biological role, regulator of mitochondrial fusion: acts by forming homo- and heterodimers at the mitochondrial outer membrane and facilitating the formation of pld6/MitoPLD dimers. May act by regulating phospholipid metabolism via pld6/MitoPLD. In Xenopus laevis (African clawed frog), this protein is Mitoguardin 2.